Consider the following 197-residue polypeptide: MNLVPTVIEQSSRGERAYDIYSRLLKDRIIMLSGPIEDEMANSIVAQLLFLDAQDSTKDIYLYINSPGGVVTSGMAIYDTMNFIKADVQTIVIGMAASMASVLVSSGAKGKRFGLPHSQVLIHQPSGGAQGQQTEIEIAATEILKTRKMLNGILAKNSGQPIEKIQADTERDHYLTAQEAVDYGLLDGVMENNSKLK.

S98 functions as the Nucleophile in the catalytic mechanism. H123 is a catalytic residue.

Belongs to the peptidase S14 family. Fourteen ClpP subunits assemble into 2 heptameric rings which stack back to back to give a disk-like structure with a central cavity, resembling the structure of eukaryotic proteasomes.

The protein resides in the cytoplasm. The catalysed reaction is Hydrolysis of proteins to small peptides in the presence of ATP and magnesium. alpha-casein is the usual test substrate. In the absence of ATP, only oligopeptides shorter than five residues are hydrolyzed (such as succinyl-Leu-Tyr-|-NHMec, and Leu-Tyr-Leu-|-Tyr-Trp, in which cleavage of the -Tyr-|-Leu- and -Tyr-|-Trp bonds also occurs).. Cleaves peptides in various proteins in a process that requires ATP hydrolysis. Has a chymotrypsin-like activity. Plays a major role in the degradation of misfolded proteins. The chain is ATP-dependent Clp protease proteolytic subunit from Limosilactobacillus reuteri (strain DSM 20016) (Lactobacillus reuteri).